The primary structure comprises 1009 residues: DENN domain-containing protein 2A (1009 aa).

Disordered stretches follow at residues 15–153 (AEAS…LRFQ), 171–334 (KDGS…HRKS), 434–479 (KLLD…KKRK), and 498–532 (KRVK…LKAH). Basic and acidic residues-rich tracts occupy residues 45-59 (NIKD…KKEV), 130-147 (QPER…EPRL), 218-247 (HPSD…DRSL), and 275-284 (HAGEGDKDGK). The segment covering 297 to 314 (PPLPSLPPPPLPSSPPPS) has biased composition (pro residues). Basic and acidic residues predominate over residues 434-443 (KLLDTRKLSR). Residues 503–513 (LSQSMESNSGK) are compositionally biased toward polar residues. Phosphoserine is present on Ser551. The uDENN domain occupies 566 to 715 (EYFVVVSLHK…PFPALGKTIL (150 aa)). Residues 737-870 (RLEHVDFESL…LQVALEHILE (134 aa)) enclose the cDENN domain. The dDENN domain occupies 872-969 (RNELACEQDE…QERELRRQDA (98 aa)).

Its subcellular location is the cytoplasm. The protein localises to the cytoskeleton. Functionally, guanine nucleotide exchange factor (GEF) which may activate RAB9A and RAB9B. Promotes the exchange of GDP to GTP, converting inactive GDP-bound Rab proteins into their active GTP-bound form. May play a role in late endosomes back to trans-Golgi network/TGN transport. The sequence is that of DENN domain-containing protein 2A (DENND2A) from Homo sapiens (Human).